A 134-amino-acid chain; its full sequence is Ribosome-binding factor A (134 aa).

Belongs to the RbfA family. Monomer. Binds 30S ribosomal subunits, but not 50S ribosomal subunits or 70S ribosomes.

It is found in the cytoplasm. In terms of biological role, one of several proteins that assist in the late maturation steps of the functional core of the 30S ribosomal subunit. Associates with free 30S ribosomal subunits (but not with 30S subunits that are part of 70S ribosomes or polysomes). Required for efficient processing of 16S rRNA. May interact with the 5'-terminal helix region of 16S rRNA. The polypeptide is Ribosome-binding factor A (Psychrobacter arcticus (strain DSM 17307 / VKM B-2377 / 273-4)).